The chain runs to 145 residues: Sec-independent protein translocase protein TatB (145 aa).

The helical transmembrane segment at 1 to 21 threads the bilayer; sequence MLDVGMTELLCFAIIAILVLG.

This sequence belongs to the TatB family. As to quaternary structure, the Tat system comprises two distinct complexes: a TatABC complex, containing multiple copies of TatA, TatB and TatC subunits, and a separate TatA complex, containing only TatA subunits. Substrates initially bind to the TatABC complex, which probably triggers association of the separate TatA complex to form the active translocon.

Its subcellular location is the cell inner membrane. Its function is as follows. Part of the twin-arginine translocation (Tat) system that transports large folded proteins containing a characteristic twin-arginine motif in their signal peptide across membranes. Together with TatC, TatB is part of a receptor directly interacting with Tat signal peptides. TatB may form an oligomeric binding site that transiently accommodates folded Tat precursor proteins before their translocation. The chain is Sec-independent protein translocase protein TatB from Acinetobacter baumannii (strain ATCC 17978 / DSM 105126 / CIP 53.77 / LMG 1025 / NCDC KC755 / 5377).